Here is an 874-residue protein sequence, read N- to C-terminus: Coatomer subunit gamma-1 (874 aa).

The span at 1–11 shows a compositional bias: basic and acidic residues; sequence MLKKFDKKDEE. The disordered stretch occupies residues 1-21; sequence MLKKFDKKDEESGGGSNPLQH. HEAT repeat units lie at residues 64–101, 283–320, 322–355, and 356–392; these read TEAT…IAED, KELA…KHPS, VTAC…GSES, and SIDR…KYPR. Position 594 is a phosphothreonine (Thr594). The interval 609–874 is interaction with ZNF289/ARFGAP2; sequence RQEIFQEQLA…PVDIILASVG (266 aa).

This sequence belongs to the COPG family. As to quaternary structure, oligomeric complex that consists of at least the alpha, beta, beta', gamma, delta, epsilon and zeta subunits. Interacts with ZNF289/ARFGAP2 through its C-terminal appendage domain. Interacts with EGFR upon EGF treatment; interaction is essential for regulation of EGF-dependent nuclear transport of EGFR by retrograde trafficking from the Golgi to the ER. The coatomer interacts with KDEL receptors; the interaction is important for retrograde trafficking of KDEL-bearing proteins from the Golgi to the endoplasmic reticulum. Interacts with COPB1. Interacts with TMED10 (via C-terminus). Interacts with TMED2, TMED3, TMED7 and TMED9.

The protein resides in the cytoplasm. It localises to the cytosol. The protein localises to the golgi apparatus membrane. Its subcellular location is the cytoplasmic vesicle. It is found in the COPI-coated vesicle membrane. Functionally, the coatomer is a cytosolic protein complex that binds to dilysine motifs and reversibly associates with Golgi non-clathrin-coated vesicles, which further mediate biosynthetic protein transport from the ER, via the Golgi up to the trans Golgi network. Coatomer complex is required for budding from Golgi membranes, and is essential for the retrograde Golgi-to-ER transport of dilysine-tagged proteins. In mammals, the coatomer can only be recruited by membranes associated to ADP-ribosylation factors (ARFs), which are small GTP-binding proteins; the complex also influences the Golgi structural integrity, as well as the processing, activity, and endocytic recycling of LDL receptors. Required for limiting lipid storage in lipid droplets. Involved in lipid homeostasis by regulating the presence of perilipin family members PLIN2 and PLIN3 at the lipid droplet surface and promoting the association of adipocyte triglyceride lipase (PNPLA2) with the lipid droplet surface to mediate lipolysis. This chain is Coatomer subunit gamma-1 (Copg1), found in Mus musculus (Mouse).